A 223-amino-acid chain; its full sequence is Putative C-type lectin protein 51 (223 aa).

A signal peptide spans 1-31 (MAKRINFTSCLIFTSCFTAFIVSLCLLVSSC). In terms of domain architecture, C-type lectin spans 111 to 218 (QEGRCYHYSR…CDTPRRCLCG (108 aa)). An intrachain disulfide couples Cys-193 to Cys-209.

The sequence is that of Putative C-type lectin protein 51 (51) from Equine herpesvirus 2 (strain 86/87) (EHV-2).